A 453-amino-acid polypeptide reads, in one-letter code: GTPase Der (453 aa).

EngA-type G domains are found at residues 4 to 169 (PIVA…SETP) and 177 to 352 (IKVA…RQFE). Residues 10 to 17 (GRPNVGKS), 57 to 61 (DTGGL), 120 to 123 (NKCE), 183 to 190 (GRPNVGKS), 230 to 234 (DTAGI), and 295 to 298 (NKWD) each bind GTP. A KH-like domain is found at 353-438 (QRVTTSVINE…PIRLLWRGKK (86 aa)).

It belongs to the TRAFAC class TrmE-Era-EngA-EngB-Septin-like GTPase superfamily. EngA (Der) GTPase family. As to quaternary structure, associates with the 50S ribosomal subunit.

In terms of biological role, GTPase that plays an essential role in the late steps of ribosome biogenesis. This chain is GTPase Der, found in Acaryochloris marina (strain MBIC 11017).